The sequence spans 106 residues: Large ribosomal subunit protein P2 (106 aa).

The tract at residues 79–106 (GAGAVAEAKKEEPEEEEADDDMGFGLFD) is disordered. Positions 91–100 (PEEEEADDDM) are enriched in acidic residues.

This sequence belongs to the eukaryotic ribosomal protein P1/P2 family. P1 and P2 exist as dimers at the large ribosomal subunit. Phosphorylated.

Functionally, plays an important role in the elongation step of protein synthesis. The polypeptide is Large ribosomal subunit protein P2 (LIP) (Leishmania infantum).